Reading from the N-terminus, the 108-residue chain is Long neurotoxin 43 (108 aa).

The first 21 residues, 1–21, serve as a signal peptide directing secretion; it reads MKTLLLTLVVVTIVCLDLAYT. Cystine bridges form between Cys-24/Cys-42, Cys-35/Cys-63, Cys-48/Cys-52, Cys-67/Cys-78, and Cys-79/Cys-84.

This sequence belongs to the three-finger toxin family. Long-chain subfamily. Type II alpha-neurotoxin sub-subfamily. Expressed by the venom gland.

Its subcellular location is the secreted. In terms of biological role, binds with high affinity to muscular (alpha-1/CHRNA1) and neuronal (alpha-7/CHRNA7) nicotinic acetylcholine receptor (nAChR) and inhibits acetylcholine from binding to the receptor, thereby impairing neuromuscular and neuronal transmission. The protein is Long neurotoxin 43 of Drysdalia coronoides (White-lipped snake).